The sequence spans 467 residues: Mitogen-activated protein kinase kinase kinase 8 (467 aa).

T80 is subject to Phosphothreonine. S138 and S141 each carry phosphoserine. Residues V144–V152 and K167 contribute to the ATP site. The region spanning R146–L388 is the Protein kinase domain. D253 acts as the Proton acceptor in catalysis. T290 is subject to Phosphothreonine. Phosphoserine occurs at positions 400 and 443.

It belongs to the protein kinase superfamily. STE Ser/Thr protein kinase family. MAP kinase kinase kinase subfamily. Forms a ternary complex with NFKB1/p105 and TNIP2. Interacts with NFKB1; the interaction increases the stability of MAP3K8 but inhibits its MEK phosphorylation activity, whereas loss of interaction following LPS stimulation leads to its degradation. Interacts with CD40 and TRAF6; the interaction is required for ERK activation. Interacts with KSR2; the interaction inhibits ERK and NF-kappa-B activation. It depends on Mg(2+) as a cofactor. Post-translationally, autophosphorylated. In terms of tissue distribution, expressed in spleen, thymus, liver and lung.

It is found in the cytoplasm. It carries out the reaction L-seryl-[protein] + ATP = O-phospho-L-seryl-[protein] + ADP + H(+). The catalysed reaction is L-threonyl-[protein] + ATP = O-phospho-L-threonyl-[protein] + ADP + H(+). In terms of biological role, required for lipopolysaccharide (LPS)-induced, TLR4-mediated activation of the MAPK/ERK pathway in macrophages, thus being critical for production of the pro-inflammatory cytokine TNF-alpha (TNF) during immune responses. Involved in the regulation of T-helper cell differentiation and IFNG expression in T-cells. Involved in mediating host resistance to bacterial infection through negative regulation of type I interferon (IFN) production. Transduces CD40 and TNFRSF1A signals that activate ERK in B-cells and macrophages, and thus may play a role in the regulation of immunoglobulin production. May also play a role in the transduction of TNF signals that activate JNK and NF-kappa-B in some cell types. In adipocytes, activates MAPK/ERK pathway in an IKBKB-dependent manner in response to IL1B and TNF, but not insulin, leading to induction of lipolysis. Plays a role in the cell cycle. The chain is Mitogen-activated protein kinase kinase kinase 8 (Map3k8) from Rattus norvegicus (Rat).